Here is a 116-residue protein sequence, read N- to C-terminus: Large ribosomal subunit protein uL22 (116 aa).

It belongs to the universal ribosomal protein uL22 family. Part of the 50S ribosomal subunit.

Its function is as follows. This protein binds specifically to 23S rRNA; its binding is stimulated by other ribosomal proteins, e.g. L4, L17, and L20. It is important during the early stages of 50S assembly. It makes multiple contacts with different domains of the 23S rRNA in the assembled 50S subunit and ribosome. Functionally, the globular domain of the protein is located near the polypeptide exit tunnel on the outside of the subunit, while an extended beta-hairpin is found that lines the wall of the exit tunnel in the center of the 70S ribosome. The protein is Large ribosomal subunit protein uL22 of Wolbachia pipientis subsp. Culex pipiens (strain wPip).